We begin with the raw amino-acid sequence, 285 residues long: Pantothenate synthetase (285 aa).

ATP is bound at residue 30 to 37 (MGNLHDGH). H37 acts as the Proton donor in catalysis. Q61 provides a ligand contact to (R)-pantoate. Q61 lines the beta-alanine pocket. 149-152 (GEKD) is a binding site for ATP. (R)-pantoate is bound at residue Q155. ATP contacts are provided by residues I178 and 186–189 (LSSR).

This sequence belongs to the pantothenate synthetase family. As to quaternary structure, homodimer.

The protein resides in the cytoplasm. It catalyses the reaction (R)-pantoate + beta-alanine + ATP = (R)-pantothenate + AMP + diphosphate + H(+). It participates in cofactor biosynthesis; (R)-pantothenate biosynthesis; (R)-pantothenate from (R)-pantoate and beta-alanine: step 1/1. Functionally, catalyzes the condensation of pantoate with beta-alanine in an ATP-dependent reaction via a pantoyl-adenylate intermediate. The protein is Pantothenate synthetase of Buchnera aphidicola subsp. Acyrthosiphon pisum (strain Tuc7).